The primary structure comprises 275 residues: Lectin (275 aa).

Residues 1–30 form the signal peptide; the sequence is MASLQTQMISFYAIFLSILLTTILFFKVNS. Residues Glu-149 and Asp-151 each coordinate Mn(2+). Ca(2+)-binding residues include Asp-151, Phe-153, Asn-155, and Asp-159. Mn(2+) is bound by residues Asp-159 and His-166. N-linked (GlcNAc...) asparagine glycosylation occurs at Asn-217.

It belongs to the leguminous lectin family. In terms of assembly, tetramer of two alpha and two beta chains.

Functionally, D-mannose specific lectin. The sequence is that of Lectin (LECA) from Pisum sativum (Garden pea).